Consider the following 571-residue polypeptide: Glutamate--tRNA ligase (571 aa).

The short motif at 106 to 116 is the 'HIGH' region element; sequence PNPDGAFHLGN.

This sequence belongs to the class-I aminoacyl-tRNA synthetase family. Glutamate--tRNA ligase type 2 subfamily.

The protein localises to the cytoplasm. It carries out the reaction tRNA(Glu) + L-glutamate + ATP = L-glutamyl-tRNA(Glu) + AMP + diphosphate. In terms of biological role, catalyzes the attachment of glutamate to tRNA(Glu) in a two-step reaction: glutamate is first activated by ATP to form Glu-AMP and then transferred to the acceptor end of tRNA(Glu). This Pyrococcus abyssi (strain GE5 / Orsay) protein is Glutamate--tRNA ligase.